The chain runs to 427 residues: Serine--tRNA ligase (427 aa).

231–233 (TAE) is an L-serine binding site. Residue 262–264 (RSE) participates in ATP binding. Glu285 serves as a coordination point for L-serine. Residue 349–352 (EISS) coordinates ATP. Ser385 is an L-serine binding site.

The protein belongs to the class-II aminoacyl-tRNA synthetase family. Type-1 seryl-tRNA synthetase subfamily. As to quaternary structure, homodimer. The tRNA molecule binds across the dimer.

Its subcellular location is the cytoplasm. It catalyses the reaction tRNA(Ser) + L-serine + ATP = L-seryl-tRNA(Ser) + AMP + diphosphate + H(+). The enzyme catalyses tRNA(Sec) + L-serine + ATP = L-seryl-tRNA(Sec) + AMP + diphosphate + H(+). Its pathway is aminoacyl-tRNA biosynthesis; selenocysteinyl-tRNA(Sec) biosynthesis; L-seryl-tRNA(Sec) from L-serine and tRNA(Sec): step 1/1. In terms of biological role, catalyzes the attachment of serine to tRNA(Ser). Is also able to aminoacylate tRNA(Sec) with serine, to form the misacylated tRNA L-seryl-tRNA(Sec), which will be further converted into selenocysteinyl-tRNA(Sec). The protein is Serine--tRNA ligase of Exiguobacterium sp. (strain ATCC BAA-1283 / AT1b).